The primary structure comprises 289 residues: Probable vesicular-fusion protein sec17 homolog (289 aa).

S76 bears the Phosphoserine mark.

Belongs to the SNAP family.

The protein resides in the membrane. Its function is as follows. Required for vesicular transport between the endoplasmic reticulum and the Golgi apparatus. This chain is Probable vesicular-fusion protein sec17 homolog (sec17), found in Schizosaccharomyces pombe (strain 972 / ATCC 24843) (Fission yeast).